A 211-amino-acid chain; its full sequence is Metalloproteinase inhibitor 3 (211 aa).

A signal peptide spans 1–23 (MTPWLGLIVLLGSWSLGDWGAEA). Cys-24 is a binding site for Zn(2+). Involved in metalloproteinase-binding stretches follow at residues 24-27 (CTCS) and 88-89 (ES). Disulfide bonds link Cys-24-Cys-91, Cys-26-Cys-118, Cys-36-Cys-143, Cys-145-Cys-192, Cys-150-Cys-155, and Cys-163-Cys-184. Positions 24-143 (CTCSPSHPQD…GLNYRYHLGC (120 aa)) constitute an NTR domain. Residues 105-188 (TGRVYDGKMY…SKHYACIRQK (84 aa)) are mediates interaction with EFEMP1. A glycan (N-linked (GlcNAc...) asparagine) is linked at Asn-207.

This sequence belongs to the protease inhibitor I35 (TIMP) family. In terms of assembly, interacts with EFEMP1. Interacts with KDR.

Its subcellular location is the secreted. It is found in the extracellular space. It localises to the extracellular matrix. Mediates a variety of processes including matrix regulation and turnover, inflammation, and angiogenesis, through reversible inhibition of zinc protease superfamily enzymes, primarily matrix metalloproteinases (MMPs). Regulates extracellular matrix (ECM) remodeling through inhibition of matrix metalloproteinases (MMP) including MMP-1, MMP-2, MMP-3, MMP-7, MMP-9, MMP-13, MMP-14 and MMP-15. Additionally, modulates the processing of amyloid precursor protein (APP) and apolipoprotein E receptor ApoER2 by inhibiting two alpha-secretases ADAM10 and ADAM17. Functions as a tumor suppressor and a potent inhibitor of angiogenesis. Exerts its anti-angiogenic effect by directly interacting with vascular endothelial growth factor (VEGF) receptor-2/KDR, preventing its binding to the VEGFA ligand. Selectively induces apoptosis in angiogenic endothelial cells through a caspase-independent cell death pathway. Mechanistically, inhibits matrix-induced focal adhesion kinase PTK2 tyrosine phosphorylation and association with paxillin/PXN and disrupts the incorporation of ITGB3, PTK2 and PXN into focal adhesion contacts on the matrix. This chain is Metalloproteinase inhibitor 3 (TIMP3), found in Macaca mulatta (Rhesus macaque).